The primary structure comprises 33 residues: Brevinin-2DYa (33 aa).

An intrachain disulfide couples C27 to C33.

In terms of tissue distribution, expressed by the skin glands.

It is found in the secreted. In terms of biological role, antimicrobial peptide. This chain is Brevinin-2DYa, found in Rana dybowskii (Dybovsky's frog).